We begin with the raw amino-acid sequence, 247 residues long: Cell division protein ZapD (247 aa).

The protein belongs to the ZapD family. In terms of assembly, interacts with FtsZ.

The protein localises to the cytoplasm. Cell division factor that enhances FtsZ-ring assembly. Directly interacts with FtsZ and promotes bundling of FtsZ protofilaments, with a reduction in FtsZ GTPase activity. This Shigella flexneri protein is Cell division protein ZapD.